A 627-amino-acid chain; its full sequence is Neutral endopeptidase (627 aa).

In terms of domain architecture, Peptidase M13 spans 1-627 (MTRIQDDLFA…RAPENRLKIW (627 aa)). Residue His-475 coordinates Zn(2+). Residue Glu-476 is part of the active site. Residues His-479 and Glu-535 each coordinate Zn(2+). Catalysis depends on Asp-539, which acts as the Proton donor.

This sequence belongs to the peptidase M13 family. Monomer. Zn(2+) is required as a cofactor.

In terms of biological role, endopeptidase with broad substrate specificity for several oligopeptides. The chain is Neutral endopeptidase (pepO) from Lactococcus lactis subsp. lactis (strain IL1403) (Streptococcus lactis).